We begin with the raw amino-acid sequence, 256 residues long: Methylesterase 9 (256 aa).

The active-site Acyl-ester intermediate is the Ser78. Active-site charge relay system residues include Asp206 and His234.

It belongs to the AB hydrolase superfamily. Methylesterase family.

The enzyme catalyses methyl (indol-3-yl)acetate + H2O = (indol-3-yl)acetate + methanol + H(+). It carries out the reaction methyl (-)-jasmonate + H2O = jasmonate + methanol + H(+). It catalyses the reaction methyl salicylate + H2O = salicylate + methanol + H(+). It participates in plant hormone biosynthesis. The protein operates within lipid metabolism; oxylipin biosynthesis. Its activity is regulated as follows. Esterase activity is down-regulated by salicylic acid (SA). In terms of biological role, methylesterase shown to have carboxylesterase activity, methyl indole-3-acetic acid (MeIAA) esterase activity, methyl salicylate (MeSA) esterase activity and methyl jasmonate (MeJA) esterase activity in vitro. Required to convert methyl salicylate (MeSA) to salicylic acid (SA) as part of the signal transduction pathways that activate systemic acquired resistance in systemic tissue. MeSA is believed to be an inactive form that needs to be demethylated to exert a biological effect. This chain is Methylesterase 9, found in Arabidopsis thaliana (Mouse-ear cress).